A 245-amino-acid polypeptide reads, in one-letter code: 1-(5-phosphoribosyl)-5-[(5-phosphoribosylamino)methylideneamino] imidazole-4-carboxamide isomerase (245 aa).

The active-site Proton acceptor is the Asp8. The Proton donor role is filled by Asp129.

The protein belongs to the HisA/HisF family.

It localises to the cytoplasm. The enzyme catalyses 1-(5-phospho-beta-D-ribosyl)-5-[(5-phospho-beta-D-ribosylamino)methylideneamino]imidazole-4-carboxamide = 5-[(5-phospho-1-deoxy-D-ribulos-1-ylimino)methylamino]-1-(5-phospho-beta-D-ribosyl)imidazole-4-carboxamide. It participates in amino-acid biosynthesis; L-histidine biosynthesis; L-histidine from 5-phospho-alpha-D-ribose 1-diphosphate: step 4/9. This chain is 1-(5-phosphoribosyl)-5-[(5-phosphoribosylamino)methylideneamino] imidazole-4-carboxamide isomerase, found in Rhodopseudomonas palustris (strain BisB18).